A 359-amino-acid chain; its full sequence is Isopentenyl-diphosphate delta-isomerase (359 aa).

11–12 provides a ligand contact to substrate; that stretch reads RK. FMN contacts are provided by residues S68, 69 to 71, S99, and N127; that span reads GMT. Position 99 to 101 (99 to 101) interacts with substrate; that stretch reads SQR. Residue Q163 coordinates substrate. E164 provides a ligand contact to Mg(2+). Residues K199, T229, 278-280, and 299-300 contribute to the FMN site; these read GIR and AL.

The protein belongs to the IPP isomerase type 2 family. As to quaternary structure, homooctamer. Dimer of tetramers. It depends on FMN as a cofactor. The cofactor is NADPH. Requires Mg(2+) as cofactor.

The protein localises to the cytoplasm. The catalysed reaction is isopentenyl diphosphate = dimethylallyl diphosphate. Its activity is regulated as follows. Inhibited by 3,4-epoxy-3-methylbutyl diphosphate (EIPP). In terms of biological role, involved in the biosynthesis of isoprenoids. Catalyzes the 1,3-allylic rearrangement of the homoallylic substrate isopentenyl (IPP) to its allylic isomer, dimethylallyl diphosphate (DMAPP). The protein is Isopentenyl-diphosphate delta-isomerase of Methanocaldococcus jannaschii (strain ATCC 43067 / DSM 2661 / JAL-1 / JCM 10045 / NBRC 100440) (Methanococcus jannaschii).